A 491-amino-acid chain; its full sequence is Protein DETOXIFICATION 56 (491 aa).

The next 12 helical transmembrane spans lie at 39–59 (LPLV…SVFL), 72–92 (LGFS…SAAM), 111–131 (TLFM…FLWL), 154–174 (LLYL…KAYL), 181–201 (LPIM…NIVL), 212–232 (MAVW…VIVV), 261–281 (GPCC…VLLT), 291–311 (VSIL…MLSL), 336–356 (YTTL…MIAF), 379–399 (MLIM…GEIV), 409–429 (MYAN…TLAF), and 438–458 (FLIG…IFIA).

Belongs to the multi antimicrobial extrusion (MATE) (TC 2.A.66.1) family. As to quaternary structure, interacts with BCA4 and HT1. In terms of tissue distribution, preferentially expressed in guard cells.

It localises to the cell membrane. Functionally, could function as a HCO(3)(-) -sensing component in the CO(2) signaling pathway in guard cells. Acts as an upstream repressor of HT1. Plays a role in stomatal response to CO(2). In Arabidopsis thaliana (Mouse-ear cress), this protein is Protein DETOXIFICATION 56.